A 505-amino-acid polypeptide reads, in one-letter code: Calcium/calmodulin-dependent protein kinase kinase 1 (505 aa).

The segment at 28-66 (LEEADEGPEPARNGVDPPPRARAASVIPGSASRPTPVRP) is disordered. A phosphoserine mark is found at serine 67 and serine 74. Arginine 78 is modified (asymmetric dimethylarginine). Positions 84–105 (LGAQVGPYSTGPASHISPRSWR) are disordered. Serine 100 bears the Phosphoserine mark. At threonine 108 the chain carries Phosphothreonine. In terms of domain architecture, Protein kinase spans 128-409 (YKLQSEIGKG…VSDIKLHPWV (282 aa)). ATP is bound by residues 134 to 142 (IGKGAYGVV) and lysine 157. Positions 167 to 189 (QYGFPRRPPPRGSQATQGGPAKQ) are RP domain. Aspartate 275 (proton acceptor) is an active-site residue. The autoinhibitory domain stretch occupies residues 435–440 (KNSVRL). The segment at 438–463 (VRLIPSWTTVILVKSMLRKRSFGNPF) is calmodulin-binding. Residues serine 458, serine 475, and serine 492 each carry the phosphoserine modification. Positions 460–505 (GNPFEPQARREERSMSAPGSLLMKEGCGEGCKSPELPGVQEDEAAS) are disordered.

This sequence belongs to the protein kinase superfamily. Ser/Thr protein kinase family. Interacts with CAMK4 and calmodulin. Post-translationally, appears to be autophosphorylated in a Ca(2+)/calmodulin-dependent manner. Phosphorylated at multiple sites by PRCAKA/PKA. Phosphorylation of Ser-458 is blocked upon binding to Ca(2+)/calmodulin. In vitro, phosphorylated by CAMK1 and CAMK4. In terms of tissue distribution, widely expressed. Differentially expressed in various brain regions.

It is found in the cytoplasm. The protein resides in the nucleus. The catalysed reaction is L-seryl-[protein] + ATP = O-phospho-L-seryl-[protein] + ADP + H(+). It carries out the reaction L-threonyl-[protein] + ATP = O-phospho-L-threonyl-[protein] + ADP + H(+). With respect to regulation, activated by Ca(2+)/calmodulin. Binding of calmodulin may relieve intrasteric autoinhibition. Partially inhibited upon phosphorylation by PRCAKA/PKA. May be regulated through phosphorylation by CAMK1 and CAMK4. Functionally, calcium/calmodulin-dependent protein kinase that belongs to a proposed calcium-triggered signaling cascade involved in a number of cellular processes. Phosphorylates CAMK1, CAMK1D, CAMK1G and CAMK4. Involved in regulating cell apoptosis. Promotes cell survival by phosphorylating AKT1/PKB that inhibits pro-apoptotic BAD/Bcl2-antagonist of cell death. The sequence is that of Calcium/calmodulin-dependent protein kinase kinase 1 (Camkk1) from Mus musculus (Mouse).